The primary structure comprises 446 residues: C-type lectin domain family 18 member C (446 aa).

The first 26 residues, 1–26, serve as a signal peptide directing secretion; sequence MLHPETSPGRGHLLAVLLALLGTAWA. The SCP domain maps to 52–182; sequence LSLHNRLRSW…AAIEAFVCAY (131 aa). Asn-144 carries an N-linked (GlcNAc...) asparagine glycan. In terms of domain architecture, EGF-like spans 228–261; it reads PRNPCRMSCQNHGRLNISTCHCHCPPGYTGRYCQ. Intrachain disulfides connect Cys-236/Cys-249, Cys-251/Cys-260, Cys-327/Cys-432, and Cys-408/Cys-424. Positions 306 to 433 constitute a C-type lectin domain; the sequence is IDGDCFMVSS…CKTRNRYICQ (128 aa).

In terms of tissue distribution, detected in peripheral blood cells.

The protein localises to the secreted. Its subcellular location is the endoplasmic reticulum. It is found in the golgi apparatus. It localises to the endosome. Functionally, binds polysaccharidesin a Ca(2+)-independent manner with a preferentially binding to fucoidan, beta-glucans and galactans. This is C-type lectin domain family 18 member C (CLEC18C) from Homo sapiens (Human).